Consider the following 361-residue polypeptide: Epi-isozizaene synthase (361 aa).

Mg(2+) contacts are provided by aspartate 99, aspartate 103, asparagine 240, serine 244, and glutamate 248. Positions 99-103 (DDRHD) match the DDXXD motif motif.

Belongs to the terpene synthase family. The cofactor is Mg(2+). Mn(2+) is required as a cofactor. It depends on Fe(3+) as a cofactor.

It carries out the reaction (2E,6E)-farnesyl diphosphate = (+)-epi-isozizaene + diphosphate. Its pathway is sesquiterpene biosynthesis; epi-isozizaene biosynthesis. Functionally, catalyzes the cyclization of farnesyl diphosphate (FPP) to the sesquiterpene epi-isozizaene. This is Epi-isozizaene synthase (cyc1) from Streptomyces coelicolor (strain ATCC BAA-471 / A3(2) / M145).